Here is a 486-residue protein sequence, read N- to C-terminus: MIINLQQLTALLPLLIIMLTVITVILSISYNRNHFFVAVFSILGLIFALCSLYFLIEIIPINVSILFHFNSNAILYIGMILISSICTCIFSYPWLLKYPFNKEEFYLLVIISTLGAISLTISHHMASFFINIELISLPMFGLIAYSRYQKYSLESSLKYIILSGVSSSFLLFGIAWVYSISGGLDFLSIHKSFNFASEKEILVVLFGISMILLSLFFKLSIVPFHLWTPDIYQGSPTSVLSFFSTAGKISVFSVLLNFLSYFSNSDNKVIYFILSLIIILSILVGNLMALFQKDIKRFLGYTSISQIGYLLIVLLVSHKNYSFSLEASAIYLCGYLFSNIACLGIVNLISTSHINNNASSINSYRGLFWSHPLLSSVLTLVLISSAGIPMTLGFIGKFYILSIVMIEHLWLIGFAFLIGSLLGLYCYLRIILNLYLHPSKLFKRDLNIPLNWVYTPSGIVICISGIILLALGIYPNPLIGLIKCTI.

Helical transmembrane passes span 8–28 (LTAL…ILSI), 36–56 (FVAV…YFLI), 74–94 (ILYI…SYPW), 104–124 (EFYL…ISHH), 125–145 (MASF…LIAY), 160–180 (IILS…VYSI), 201–221 (ILVV…KLSI), 239–259 (VLSF…LNFL), 269–289 (VIYF…NLMA), 298–318 (FLGY…LVSH), 329–349 (AIYL…VNLI), 376–396 (SVLT…GFIG), 410–432 (WLIG…RIIL), and 459–479 (IVIC…NPLI).

It belongs to the complex I subunit 2 family. In terms of assembly, NDH-1 is composed of 13 different subunits. Subunits NuoA, H, J, K, L, M, N constitute the membrane sector of the complex.

It localises to the cell membrane. The enzyme catalyses a quinone + NADH + 5 H(+)(in) = a quinol + NAD(+) + 4 H(+)(out). Its function is as follows. NDH-1 shuttles electrons from NADH, via FMN and iron-sulfur (Fe-S) centers, to quinones in the respiratory chain. The immediate electron acceptor for the enzyme in this species is believed to be ubiquinone. Couples the redox reaction to proton translocation (for every two electrons transferred, four hydrogen ions are translocated across the cytoplasmic membrane), and thus conserves the redox energy in a proton gradient. The protein is NADH-quinone oxidoreductase subunit N of Buchnera aphidicola subsp. Acyrthosiphon pisum (strain APS) (Acyrthosiphon pisum symbiotic bacterium).